The sequence spans 499 residues: Interleukin-17 receptor B (499 aa).

The first 17 residues, 1–17, serve as a signal peptide directing secretion; that stretch reads MLLVLLILAASCRSALP. At 18 to 286 the chain is on the extracellular side; the sequence is REPTIQCGSE…PDDNRRMLGG (269 aa). Residues asparagine 67, asparagine 103, asparagine 156, and asparagine 197 are each glycosylated (N-linked (GlcNAc...) asparagine). Residues 287 to 307 traverse the membrane as a helical segment; the sequence is WLPLFLVLLVAVWVLAAGIYL. Topologically, residues 308-499 are cytoplasmic; sequence TWRQGRSTKT…QACHDSCSPL (192 aa). Residues 328-474 enclose the SEFIR domain; it reads LIKVLVVYPS…LMKDATAFHT (147 aa).

As to quaternary structure, interacts with DAZAP2. Interacts with TRAF3IP2. Liver and testis. Expressed at lower level in kidney and lung. Expressed in selected T-cell, B-cell and myeloid cell lines.

The protein localises to the cell membrane. It is found in the secreted. In terms of biological role, receptor for the pro-inflammatory cytokines IL17B and IL17E. May play a role in controlling the growth and/or differentiation of hematopoietic cells. The sequence is that of Interleukin-17 receptor B (Il17rb) from Mus musculus (Mouse).